Here is a 175-residue protein sequence, read N- to C-terminus: Alpha-crystallin B chain (175 aa).

Met-1 bears the N-acetylmethionine mark. Position 19 is a phosphoserine (Ser-19). An O-linked (GlcNAc) serine glycan is attached at Ser-41. 2 positions are modified to phosphoserine: Ser-45 and Ser-59. A sHSP domain is found at 56-164; it reads RAPSWIDTGL…PERTIPITRE (109 aa). His-83 serves as a coordination point for Zn(2+). A glycan (N-linked (Glc) (glycation) lysine) is linked at Lys-90. Position 92 is an N6-acetyllysine; alternate (Lys-92). A glycan (N-linked (Glc) (glycation) lysine; alternate) is linked at Lys-92. Zn(2+) is bound by residues His-104, Glu-106, His-111, and His-119. The interval 144–175 is disordered; it reads TVNGPRKQASGPERTIPITREEKPAVTAAPKK. N6-acetyllysine is present on Lys-166. O-linked (GlcNAc) threonine glycosylation occurs at Thr-170.

The protein belongs to the small heat shock protein (HSP20) family. As to quaternary structure, heteromer composed of three CRYAA and one CRYAB subunits. Aggregates with homologous proteins, including the small heat shock protein HSPB1, to form large heteromeric complexes. Inter-subunit bridging via zinc ions enhances stability, which is crucial as there is no protein turn over in the lens. Interacts with HSPBAP1 and TTN/titin. Interacts with TMEM109; in the cellular response to DNA damage. Interacts with DES; binds rapidly during early stages of DES filament assembly and a reduced binding seen in the later stages. Interacts with TMED10; the interaction mediates the translocation from the cytoplasm into the ERGIC (endoplasmic reticulum-Golgi intermediate compartment) and thereby secretion. Interacts with ATP6V1A and with MTOR, forming a ternary complex. Post-translationally, it is not known whether either Lys-90, or Lys-92, or both are glycated. In terms of tissue distribution, lens as well as other tissues.

The protein localises to the cytoplasm. It is found in the nucleus. It localises to the secreted. The protein resides in the lysosome. Its function is as follows. May contribute to the transparency and refractive index of the lens. Has chaperone-like activity, preventing aggregation of various proteins under a wide range of stress conditions. In lens epithelial cells, stabilizes the ATP6V1A protein, preventing its degradation by the proteasome. In Bos taurus (Bovine), this protein is Alpha-crystallin B chain (CRYAB).